The sequence spans 380 residues: Cytochrome b (380 aa).

4 consecutive transmembrane segments (helical) span residues 34–54 (FGSLLGLCLIIQILTGLFLAM), 78–99 (WLIRNTHANGASMFFICVYLHI), 114–134 (WNIGVIILLLLMATAFVGYVL), and 179–199 (FFTFHFLLPFVIVALTMVHLL). Histidine 84 and histidine 98 together coordinate heme b. Heme b-binding residues include histidine 183 and histidine 197. Histidine 202 provides a ligand contact to a ubiquinone. 4 helical membrane passes run 227-247 (YKDLLGFFILLFFLTFLALFT), 289-309 (LGGVLALAFSILILLLVPILH), 321-341 (ISQLLFWLLVANTIILTWIGG), and 348-368 (FITIGQIASITYFSFFLILFP).

This sequence belongs to the cytochrome b family. As to quaternary structure, the cytochrome bc1 complex contains 3 respiratory subunits (MT-CYB, CYC1 and UQCRFS1), 2 core proteins (UQCRC1 and UQCRC2) and probably 6 low-molecular weight proteins. Requires heme b as cofactor.

It is found in the mitochondrion inner membrane. In terms of biological role, component of the ubiquinol-cytochrome c reductase complex (complex III or cytochrome b-c1 complex) that is part of the mitochondrial respiratory chain. The b-c1 complex mediates electron transfer from ubiquinol to cytochrome c. Contributes to the generation of a proton gradient across the mitochondrial membrane that is then used for ATP synthesis. In Pastinachus sephen (Cowtail stingray), this protein is Cytochrome b (mt-cyb).